The chain runs to 752 residues: Photosystem I P700 chlorophyll a apoprotein A1 (752 aa).

The next 8 membrane-spanning stretches (helical) occupy residues 73 to 96 (IFSAHFGQLSLIFIWLSGMYFHGA), 159 to 182 (LYVTALGGLFMAGLMAFGGWFHYH), 198 to 222 (LNHHLAGLLGLGSLSWAGHQIHVSL), 294 to 312 (IAHHHLAISVLFIVAGHMY), 349 to 372 (WHANLAINLALFGSLSIIVAHHMY), 388 to 414 (LSLFTHHTWIGGFCIVGASAHGAIFMI), 436 to 458 (ALISHLNWVCIFLGTHSFGLYIH), and 533 to 551 (FMVHHIHAFTIHVTLLILL). Residues C575 and C584 each contribute to the [4Fe-4S] cluster site. 2 helical membrane-spanning segments follow: residues 591–612 (HVFLGLFWMYNCISVVIFHFSW) and 666–688 (ISAYGLMFLAAHFIWAFSLMFLF). H677 provides a ligand contact to chlorophyll a'. The chlorophyll a site is built by M685 and Y693. W694 lines the phylloquinone pocket. Residues 726–746 (AVGAAHYLLGGIATTWAFFLS) form a helical membrane-spanning segment.

This sequence belongs to the PsaA/PsaB family. The PsaA/B heterodimer binds the P700 chlorophyll special pair and subsequent electron acceptors. PSI consists of a core antenna complex that captures photons, and an electron transfer chain that converts photonic excitation into a charge separation. The eukaryotic PSI reaction center is composed of at least 11 subunits. Requires P700 is a chlorophyll a/chlorophyll a' dimer, A0 is one or more chlorophyll a, A1 is one or both phylloquinones and FX is a shared 4Fe-4S iron-sulfur center. as cofactor.

The protein localises to the plastid. It is found in the chloroplast thylakoid membrane. The enzyme catalyses reduced [plastocyanin] + hnu + oxidized [2Fe-2S]-[ferredoxin] = oxidized [plastocyanin] + reduced [2Fe-2S]-[ferredoxin]. PsaA and PsaB bind P700, the primary electron donor of photosystem I (PSI), as well as the electron acceptors A0, A1 and FX. PSI is a plastocyanin/cytochrome c6-ferredoxin oxidoreductase, converting photonic excitation into a charge separation, which transfers an electron from the donor P700 chlorophyll pair to the spectroscopically characterized acceptors A0, A1, FX, FA and FB in turn. Oxidized P700 is reduced on the lumenal side of the thylakoid membrane by plastocyanin or cytochrome c6. The chain is Photosystem I P700 chlorophyll a apoprotein A1 from Cyanidium caldarium (Red alga).